The primary structure comprises 279 residues: 2-dehydro-3-deoxyphosphooctonate aldolase (279 aa).

This sequence belongs to the KdsA family.

The protein resides in the cytoplasm. The enzyme catalyses D-arabinose 5-phosphate + phosphoenolpyruvate + H2O = 3-deoxy-alpha-D-manno-2-octulosonate-8-phosphate + phosphate. It functions in the pathway carbohydrate biosynthesis; 3-deoxy-D-manno-octulosonate biosynthesis; 3-deoxy-D-manno-octulosonate from D-ribulose 5-phosphate: step 2/3. It participates in bacterial outer membrane biogenesis; lipopolysaccharide biosynthesis. This chain is 2-dehydro-3-deoxyphosphooctonate aldolase, found in Azoarcus sp. (strain BH72).